A 225-amino-acid polypeptide reads, in one-letter code: UPF0128 protein PH1314 (225 aa).

Belongs to the UPF0128 family.

This is UPF0128 protein PH1314 from Pyrococcus horikoshii (strain ATCC 700860 / DSM 12428 / JCM 9974 / NBRC 100139 / OT-3).